The following is a 62-amino-acid chain: Sperm protamine P1 (62 aa).

Positions 1 to 62 (MARYRRHSRS…RRYSRRRRRY (62 aa)) are disordered.

The protein belongs to the protamine P1 family. Testis.

The protein resides in the nucleus. It is found in the chromosome. Functionally, protamines substitute for histones in the chromatin of sperm during the haploid phase of spermatogenesis. They compact sperm DNA into a highly condensed, stable and inactive complex. The polypeptide is Sperm protamine P1 (PRM1) (Sminthopsis longicaudata (Long-tailed dunnart)).